Consider the following 246-residue polypeptide: Envelope glycoprotein L (246 aa).

Positions 1–19 are cleaved as a signal peptide; sequence MKTNIFFIFLISILNQIYA. The region spanning 29–235 is the gL betaherpesvirus-type domain; the sequence is LEQECIKNIL…EKYNEVLPFR (207 aa). A disulfide bond links Cys-134 and Cys-139.

This sequence belongs to the herpesviridae glycoprotein L (gL) family. Betaherpesvirinae gL subfamily. Interacts with glycoprotein H (gH); this interaction is necessary for the correct processing and cell surface expression of gH.

The protein localises to the virion membrane. It localises to the host cell membrane. The protein resides in the host Golgi apparatus. It is found in the host trans-Golgi network. Functionally, the heterodimer glycoprotein H-glycoprotein L is required for the fusion of viral and plasma membranes leading to virus entry into the host cell. Acts as a functional inhibitor of gH and maintains gH in an inhibited form. Upon binding to host integrins, gL dissociates from gH leading to activation of the viral fusion glycoproteins gB and gH. The protein is Envelope glycoprotein L of Homo sapiens (Human).